The following is a 154-amino-acid chain: Ribosomal RNA large subunit methyltransferase H (154 aa).

Position 102 (Gly102) interacts with S-adenosyl-L-methionine.

Belongs to the RNA methyltransferase RlmH family. As to quaternary structure, homodimer.

The protein resides in the cytoplasm. It carries out the reaction pseudouridine(1915) in 23S rRNA + S-adenosyl-L-methionine = N(3)-methylpseudouridine(1915) in 23S rRNA + S-adenosyl-L-homocysteine + H(+). In terms of biological role, specifically methylates the pseudouridine at position 1915 (m3Psi1915) in 23S rRNA. In Caulobacter sp. (strain K31), this protein is Ribosomal RNA large subunit methyltransferase H.